Reading from the N-terminus, the 487-residue chain is MIKIDLAQIRTTVPEMRRVKQIHFVGIGGAGMGGIAEVLAYEGYKISGSDIAENPVVRRLRSLGAEIFIGHQQDNIYGASVVVVSTAINADNPELLAAQQARIPVVRRAEMLAELMRYRHGVAVSGTHGKTTTTSLIASIYGQAQLDPTFVIGGLLNSAGTNAKLGQSRYLIAEADESDASFLHLQPMVSVVTNIEADHMDTYEGNFEVLKDTFVRFIQNLPFYGTAVVCLDDAVIEQLIPRFARQTVTYGFHEQADVRISDFSQCVNRSEFSVHRINKPAMKIQLNLPGKHNALNAAAAIAVAMEDDIDDFSISKALNEFAGIGRRFEQYGEFETGRGKAILVDDYGHHPTEVQATIDAARAAWPDKRLVMAYQPHRYTRTRDLYEDFAHVLAQVDQLLLLDVYAAGETPIAGADSRSLCRTIRQRSGKEPIFVASPEVLPAMLAQIIDDGDLVLTQGAGNIGAVVKTLAELQLNIEKMKKASRVQ.

Residue 126–132 (GTHGKTT) coordinates ATP.

This sequence belongs to the MurCDEF family.

Its subcellular location is the cytoplasm. It catalyses the reaction UDP-N-acetyl-alpha-D-muramate + L-alanine + ATP = UDP-N-acetyl-alpha-D-muramoyl-L-alanine + ADP + phosphate + H(+). The protein operates within cell wall biogenesis; peptidoglycan biosynthesis. In terms of biological role, cell wall formation. The sequence is that of UDP-N-acetylmuramate--L-alanine ligase from Psychromonas ingrahamii (strain DSM 17664 / CCUG 51855 / 37).